A 1562-amino-acid polypeptide reads, in one-letter code: MKVKKTYGFRKSKISKTLCGAVLGTVAAVSVAGQKVFADETTTTSDVDTKVVGTQTGNPATNLPEAQGSASKEAEQSQNQAGETNGSIPVEVPKTDLDQAAKDAKSAGVNVVQDADVNKGTVKTAEEAVQKETEIKEDYTKQAEDIKKTTDQYKSDVAAHEAEVAKIKAKNQATKEQYEKDMAAHKAEVERINAANAASKTAYEAKLAQYQADLAAVQKTNAANQAAYQKALAAYQAELKRVQEANAAAKAAYDTAVAANNAKNTEIAAANEEIRKRNATAKAEYETKLAQYQAELKRVQEANAANEADYQAKLTAYQTELARVQKANADAKAAYEAAVAANNAKNAALTAENTAIKQRNENAKATYEAALKQYEADLAAVKKANAANEADYQAKLTAYQTELARVQKANADAKAAYEAAVAANNAANAALTAENTAIKKRNADAKADYEAKLAKYQADLAKYQKDLADYPVKLKAYEDEQASIKAALAELEKHKNEDGNLTEPSAQNLVYDLEPNANLSLTTDGKFLKASAVDDAFSKSTSKAKYDQKILQLDDLDITNLEQSNDVASSMELYGNFGDKAGWSTTVSNNSQVKWGSVLLERGQSATATYTNLQNSYYNGKKISKIVYKYTVDPKSKFQGQKVWLGIFTDPTLGVFASAYTGQVEKNTSIFIKNEFTFYDEDGKPINFDNALLSVASLNRENNSIEMAKDYTGKFVKISGSSIGEKNGMIYATDTLNFRQGQGGARWTMYTRASEPGSGWDSSDAPNSWYGAGAIRMSGPNNSVTLGAISSTLVVPADPTMAIETGKKPNIWYSLNGKIRAVNVPKVTKEKPTPPVKPTAPTKPTYETEKPLKPAPVAPNYEKEPTPPTRTPDQAEPNKPTPPTYETEKPLEPAPVEPSYEAEPTPPTRTPDQAEPNKPTPPTYETEKPLEPAPVEPSYEAEPTPPTPTPDQPEPNKPVEPTYEVIPTPPTDPVYQDLPTPPSVPTVHFHYFKLAVQPQVNKEIRNNNDINIDRTLVAKQSVVKFQLKTADLPAGRDETTSFVLVDPLPSGYQFNPEATKAASPGFDVTYDNATNTVTFKATAATLATFNADLTKSVATIYPTVVGQVLNDGATYKNNFTLTVNDAYGIKSNVVRVTTPGKPNDPDNPNNNYIKPTKVNKNENGVVIDGKTVLAGSTNYYELTWDLDQYKNDRSSADTIQKGFYYVDDYPEEALELRQDLVKITDANGNEVTGVSVDNYTNLEAAPQEIRDVLSKAGIRPKGAFQIFRADNPREFYDTYVKTGIDLKIVSPMVVKKQMGQTGGSYENQAYQIDFGNGYASNIIINNVPKINPKKDVTLTLDPADTNNVDGQTIPLNTVFNYRLIGGIIPADHSEELFEYNFYDDYDQTGDHYTGQYKVFAKVDITFKDGSIIKSGAELTQYTTAEVDTAKGAITIKFKEAFLRSVSIDSAFQAESYIQMKRIAVGTFENTYINTVNGVTYSSNTVKTTTPEDPTDPTDPQDPSSPRTSTVINYKPQSTAYQPSSVQETLPNTGVTNNAYMPLLGIIGLVTSFSLLGLKAKKD.

A signal peptide spans 1–38 (MKVKKTYGFRKSKISKTLCGAVLGTVAAVSVAGQKVFA). Positions 42–54 (TTTSDVDTKVVGT) are enriched in low complexity. The disordered stretch occupies residues 42–91 (TTTSDVDTKVVGTQTGNPATNLPEAQGSASKEAEQSQNQAGETNGSIPVE). Residues 60–551 (ATNLPEAQGS…SKAKYDQKIL (492 aa)) are helical. Residues 76–87 (QSQNQAGETNGS) are compositionally biased toward polar residues. Ag I/II A repeat units lie at residues 147-221 (KKTT…QKTN), 222-303 (AANQ…QEAN), 304-385 (AANE…KKAN), and 386-467 (AANE…QKDL). Disordered stretches follow at residues 824–973 (VPKV…PTDP) and 1482–1509 (SNTV…RTST). Positions 943–958 (PTPPTPTPDQPEPNKP) are enriched in pro residues. Over residues 1500 to 1509 (QDPSSPRTST) the composition is skewed to low complexity. An LPXTG sorting signal motif is present at residues 1529–1533 (LPNTG). At T1532 the chain carries Pentaglycyl murein peptidoglycan amidated threonine. Residues 1533–1562 (GVTNNAYMPLLGIIGLVTSFSLLGLKAKKD) constitute a propeptide, removed by sortase.

Belongs to the antigen I/II family. Post-translationally, detected as a 185 kDa cell surface protein, but also as 2 proteins in S.mutans culture supernatants of about 150 kDa (antigen I) and 50 kDa (antigen II); antigen II is only seen after proteolysis. Antigen I and II have the same N-terminus but different C-termini.

It is found in the secreted. The protein resides in the cell wall. In terms of biological role, surface protein antigen implicated in dental caries. In Streptococcus mutans serotype c (strain ATCC 700610 / UA159), this protein is Cell surface antigen I/II.